The chain runs to 401 residues: tRNA(Met) cytidine acetate ligase (401 aa).

Residues 7 to 20 (IVEY…HLYH), G102, N164, and R189 each bind ATP.

It belongs to the TmcAL family.

It localises to the cytoplasm. The catalysed reaction is cytidine(34) in elongator tRNA(Met) + acetate + ATP = N(4)-acetylcytidine(34) in elongator tRNA(Met) + AMP + diphosphate. Catalyzes the formation of N(4)-acetylcytidine (ac(4)C) at the wobble position of elongator tRNA(Met), using acetate and ATP as substrates. First activates an acetate ion to form acetyladenylate (Ac-AMP) and then transfers the acetyl group to tRNA to form ac(4)C34. This chain is tRNA(Met) cytidine acetate ligase, found in Thermoanaerobacter pseudethanolicus (strain ATCC 33223 / 39E) (Clostridium thermohydrosulfuricum).